The primary structure comprises 448 residues: Tryptophan--tRNA ligase (448 aa).

Residues 10–12 (TPT) and 18–19 (GN) contribute to the ATP site. The 'HIGH' region motif lies at 11–19 (PTGTPHLGN). D143 contributes to the L-tryptophan binding site. Residues 155 to 157 (GRD), L197, and 204 to 208 (KMSKS) each bind ATP. A 'KMSKS' region motif is present at residues 204 to 208 (KMSKS).

This sequence belongs to the class-I aminoacyl-tRNA synthetase family. Homodimer.

Its subcellular location is the cytoplasm. The enzyme catalyses tRNA(Trp) + L-tryptophan + ATP = L-tryptophyl-tRNA(Trp) + AMP + diphosphate + H(+). Catalyzes the attachment of tryptophan to tRNA(Trp). This is Tryptophan--tRNA ligase from Pseudomonas aeruginosa (strain ATCC 15692 / DSM 22644 / CIP 104116 / JCM 14847 / LMG 12228 / 1C / PRS 101 / PAO1).